Here is a 156-residue protein sequence, read N- to C-terminus: Small ribosomal subunit protein uS7 (156 aa).

Belongs to the universal ribosomal protein uS7 family. In terms of assembly, part of the 30S ribosomal subunit. Contacts proteins S9 and S11.

Its function is as follows. One of the primary rRNA binding proteins, it binds directly to 16S rRNA where it nucleates assembly of the head domain of the 30S subunit. Is located at the subunit interface close to the decoding center, probably blocks exit of the E-site tRNA. The sequence is that of Small ribosomal subunit protein uS7 (rpsG) from Geobacillus stearothermophilus (Bacillus stearothermophilus).